Here is a 101-residue protein sequence, read N- to C-terminus: Gamma-secretase subunit PEN-2 (101 aa).

The Cytoplasmic segment spans residues 1 to 17; sequence MNLERVSNEEKLNLCRK. Positions 18 to 36 form an intramembrane region, helical; that stretch reads YYLGGFAFLPFLWLVNIFW. Residues 37-57 are Cytoplasmic-facing; sequence FFREAFLVPAYTEQSQIKGYV. A helical transmembrane segment spans residues 58–78; it reads WRSAVGFLFWVIVLTSWITIF. Residues 79 to 101 are Lumenal-facing; that stretch reads QIYRPRWGALGDYLSFTIPLGTP.

The protein belongs to the PEN-2 family. As to quaternary structure, the functional gamma-secretase complex is composed of at least four polypeptides: a presenilin homodimer (PSEN1 or PSEN2), nicastrin (NCSTN), APH1 (APH1A or APH1B) and PSENEN. As to expression, widely expressed. Expressed in leukocytes, lung, placenta, small intestine, liver, kidney, spleen thymus, skeletal muscle, heart and brain.

It is found in the endoplasmic reticulum membrane. The protein localises to the golgi apparatus. The protein resides in the golgi stack membrane. It localises to the cell membrane. Its subcellular location is the membrane. In terms of biological role, essential subunit of the gamma-secretase complex, an endoprotease complex that catalyzes the intramembrane cleavage of integral membrane proteins such as Notch receptors and APP (amyloid-beta precursor protein). The gamma-secretase complex plays a role in Notch and Wnt signaling cascades and regulation of downstream processes via its role in processing key regulatory proteins, and by regulating cytosolic CTNNB1 levels. PSENEN modulates both endoproteolysis of presenilin and gamma-secretase activity. The polypeptide is Gamma-secretase subunit PEN-2 (PSENEN) (Homo sapiens (Human)).